We begin with the raw amino-acid sequence, 591 residues long: Thiol:disulfide interchange protein DsbD 1 (591 aa).

Residues 1-18 (MRRLLTLILLLVALPAGA) form the signal peptide. Over 19–175 (GLFDSRPGAS…GPLEHKGKRS (157 aa)) the chain is Periplasmic. Intrachain disulfides connect C134/C140 and C191/C313. The chain crosses the membrane as a helical span at residues 176-196 (LLFFFLAGLTLTFTPCVLPML). Topologically, residues 197-213 (PILSGVVLRGRPGGGRG) are cytoplasmic. Residues 214 to 234 (FVLSLAYVLPMALCFALLGAL) form a helical membrane-spanning segment. Residues 235–251 (MGMFGASLNLQAQLQSP) lie on the Periplasmic side of the membrane. Residues 252–272 (WVLVPFAAFFALFAVAMFGFF) traverse the membrane as a helical segment. Topologically, residues 273–295 (ELRLPGFIREPLDRLAGDARGGS) are cytoplasmic. The chain crosses the membrane as a helical span at residues 296–316 (ILGAATLGVLSSLLVSPCVSA). The Periplasmic segment spans residues 317 to 338 (PLAASLLYISASGDAWGGGLQL). A helical membrane pass occupies residues 339-359 (FALGLGMGTPLVVFGAGGGAL). At 360–365 (LPKSGA) the chain is on the cytoplasmic side. The helical transmembrane segment at 366 to 386 (WMNGVRNAFGVLLLAVAVWLL) threads the bilayer. At 387 to 392 (ERVVSG) the chain is on the periplasmic side. Residues 393-413 (PVALMLWGMLAGGAGLALGAL) form a helical membrane-spanning segment. The Cytoplasmic segment spans residues 414–423 (EFTPKSAARR). The chain crosses the membrane as a helical span at residues 424–444 (LLQLLGLMFLTYAVAAWIGAL). Over 445–591 (QGESDPIHPL…ERLRRAATRQ (147 aa)) the chain is Periplasmic. Positions 452–589 (HPLGRSVPSI…LAERLRRAAT (138 aa)) constitute a Thioredoxin domain. C504 and C507 form a disulfide bridge.

Belongs to the thioredoxin family. DsbD subfamily.

Its subcellular location is the cell inner membrane. The catalysed reaction is [protein]-dithiol + NAD(+) = [protein]-disulfide + NADH + H(+). It carries out the reaction [protein]-dithiol + NADP(+) = [protein]-disulfide + NADPH + H(+). Required to facilitate the formation of correct disulfide bonds in some periplasmic proteins and for the assembly of the periplasmic c-type cytochromes. Acts by transferring electrons from cytoplasmic thioredoxin to the periplasm. This transfer involves a cascade of disulfide bond formation and reduction steps. In Pseudomonas aeruginosa (strain ATCC 15692 / DSM 22644 / CIP 104116 / JCM 14847 / LMG 12228 / 1C / PRS 101 / PAO1), this protein is Thiol:disulfide interchange protein DsbD 1.